The chain runs to 469 residues: uncharacterized protein (469 aa).

Disordered regions lie at residues Arg-248–Ser-314 and Gln-327–Thr-418. 2 stretches are compositionally biased toward polar residues: residues Glu-292–Ser-305 and Thr-350–Val-365. A compositionally biased stretch (low complexity) spans Thr-366 to Ser-377.

This is an uncharacterized protein from Cryphonectria parasitica (Chestnut blight fungus).